We begin with the raw amino-acid sequence, 237 residues long: Small ribosomal subunit protein uS3 (237 aa).

In terms of domain architecture, KH type-2 spans 39–107 (VRQFLTKELK…PAQINISEVR (69 aa)).

This sequence belongs to the universal ribosomal protein uS3 family. As to quaternary structure, part of the 30S ribosomal subunit. Forms a tight complex with proteins S10 and S14.

Functionally, binds the lower part of the 30S subunit head. Binds mRNA in the 70S ribosome, positioning it for translation. In Aeromonas hydrophila subsp. hydrophila (strain ATCC 7966 / DSM 30187 / BCRC 13018 / CCUG 14551 / JCM 1027 / KCTC 2358 / NCIMB 9240 / NCTC 8049), this protein is Small ribosomal subunit protein uS3.